Consider the following 353-residue polypeptide: Glucose import ATP-binding protein GlcV (353 aa).

An ABC transporter domain is found at 4-241 (IIVKNVSKVF…PVSIQVASLI (238 aa)). ATP-binding positions include 40–46 (SGAGKTT), glutamine 89, and glutamate 166.

Belongs to the ABC transporter superfamily. As to quaternary structure, the complex is composed of two ATP-binding proteins (GlcV), two transmembrane proteins (GlcT and GlcU) and a solute-binding protein (GlcS). Forms transient head-to-tail homodimers in the presence of ATP-Mg(2+).

The protein resides in the cell membrane. The catalysed reaction is D-glucose(out) + ATP + H2O = D-glucose(in) + ADP + phosphate + H(+). Functionally, part of the ABC transporter complex GlcSTUV involved in glucose uptake. Responsible for energy coupling to the transport system. In vitro, as a free subunit, exhibits a constitutive ATPase activity. The polypeptide is Glucose import ATP-binding protein GlcV (Saccharolobus solfataricus (strain ATCC 35092 / DSM 1617 / JCM 11322 / P2) (Sulfolobus solfataricus)).